We begin with the raw amino-acid sequence, 48 residues long: uncharacterized protein (48 aa).

It localises to the plastid. It is found in the cyanelle. This is an uncharacterized protein from Cyanophora paradoxa.